The sequence spans 456 residues: Phosphomannomutase (456 aa).

The Phosphoserine intermediate role is filled by Ser98. Mg(2+) is bound by residues Ser98, Asp245, Asp247, and Asp249.

It belongs to the phosphohexose mutase family. Mg(2+) is required as a cofactor.

The enzyme catalyses alpha-D-mannose 1-phosphate = D-mannose 6-phosphate. It participates in nucleotide-sugar biosynthesis; GDP-alpha-D-mannose biosynthesis; alpha-D-mannose 1-phosphate from D-fructose 6-phosphate: step 2/2. It functions in the pathway bacterial outer membrane biogenesis; LPS O-antigen biosynthesis. Its function is as follows. Involved in GDP-mannose biosynthesis which serves as the activated sugar nucleotide precursor for mannose residues in cell surface polysaccharides. This enzyme participates in synthesis of the LPS O antigen. This chain is Phosphomannomutase (manB), found in Salmonella montevideo.